A 284-amino-acid chain; its full sequence is MEKILALESTVIAHGLPFPINIDTAVELEELAAETGCSAKTIGIIAGQIKVGLSREEIVQIASRKDVLKIGTAEIPFALAKKMWAATTVSATMRIAHLNNIKVFATGGIGGVHKIDQWDVSQDLAELSRTRMIVVSAGPKSILDLRSTVEMLETFQITVVGYKTDELPAFYCKSTSIHINRVDSFEEIASIFLFKEKFNLPGAVLVFNPIPDEHAIEVEQFEEWYRLSEHDLDASSVKGKGVTPFLLSRLAHYSKGKTVRSNVELLKNNVKVACEILNQLSKMQ.

E8 serves as the catalytic Proton donor. Residues K69 and V89 each coordinate substrate. D119 provides a ligand contact to Mn(2+). 121 to 123 (SQD) serves as a coordination point for substrate. K140 serves as the catalytic Nucleophile.

This sequence belongs to the pseudouridine-5'-phosphate glycosidase family. As to quaternary structure, homotrimer. Mn(2+) is required as a cofactor.

It carries out the reaction D-ribose 5-phosphate + uracil = psi-UMP + H2O. Functionally, catalyzes the reversible cleavage of pseudouridine 5'-phosphate (PsiMP) to ribose 5-phosphate and uracil. Functions biologically in the cleavage direction, as part of a pseudouridine degradation pathway. This Pseudothermotoga lettingae (strain ATCC BAA-301 / DSM 14385 / NBRC 107922 / TMO) (Thermotoga lettingae) protein is Pseudouridine-5'-phosphate glycosidase.